Reading from the N-terminus, the 656-residue chain is Threonine--tRNA ligase (656 aa).

Residues 2–67 (LMSQITIILP…KDQTKVALVT (66 aa)) form the TGS domain. A catalytic region spans residues 251-542 (DHRKLGKELG…YLEHTAGHLP (292 aa)). The Zn(2+) site is built by Cys-342, His-393, and His-519.

This sequence belongs to the class-II aminoacyl-tRNA synthetase family. In terms of assembly, homodimer. Requires Zn(2+) as cofactor.

The protein resides in the cytoplasm. It carries out the reaction tRNA(Thr) + L-threonine + ATP = L-threonyl-tRNA(Thr) + AMP + diphosphate + H(+). In terms of biological role, catalyzes the attachment of threonine to tRNA(Thr) in a two-step reaction: L-threonine is first activated by ATP to form Thr-AMP and then transferred to the acceptor end of tRNA(Thr). Also edits incorrectly charged L-seryl-tRNA(Thr). This is Threonine--tRNA ligase from Bdellovibrio bacteriovorus (strain ATCC 15356 / DSM 50701 / NCIMB 9529 / HD100).